A 27-amino-acid polypeptide reads, in one-letter code: Cationic protein C1 (27 aa).

The protein resides in the secreted. It is found in the nematocyst. This Bunodosoma caissarum (Sea anemone) protein is Cationic protein C1.